A 112-amino-acid polypeptide reads, in one-letter code: Peptidyl-tRNA hydrolase (112 aa).

It belongs to the PTH2 family.

It is found in the cytoplasm. The catalysed reaction is an N-acyl-L-alpha-aminoacyl-tRNA + H2O = an N-acyl-L-amino acid + a tRNA + H(+). In terms of biological role, the natural substrate for this enzyme may be peptidyl-tRNAs which drop off the ribosome during protein synthesis. The polypeptide is Peptidyl-tRNA hydrolase (Methanothermobacter thermautotrophicus (strain ATCC 29096 / DSM 1053 / JCM 10044 / NBRC 100330 / Delta H) (Methanobacterium thermoautotrophicum)).